We begin with the raw amino-acid sequence, 215 residues long: Large ribosomal subunit protein uL16m (215 aa).

Residues 1–36 (MALQQYNKFPFFFSGILGPTRLNGLQMPPIQTMVRW) constitute a mitochondrion transit peptide.

This sequence belongs to the universal ribosomal protein uL16 family. Component of the mitochondrial large ribosomal subunit (mt-LSU). Mature yeast 74S mitochondrial ribosomes consist of a small (37S) and a large (54S) subunit. The 37S small subunit contains a 15S ribosomal RNA (15S mt-rRNA) and at least 32 different proteins. The 54S large subunit contains a 21S rRNA (21S mt-rRNA) and at least 45 different proteins.

It is found in the mitochondrion. Its function is as follows. Component of the mitochondrial ribosome (mitoribosome), a dedicated translation machinery responsible for the synthesis of mitochondrial genome-encoded proteins, including at least some of the essential transmembrane subunits of the mitochondrial respiratory chain. The mitoribosomes are attached to the mitochondrial inner membrane and translation products are cotranslationally integrated into the membrane. This Schizosaccharomyces pombe (strain 972 / ATCC 24843) (Fission yeast) protein is Large ribosomal subunit protein uL16m (mrpl16).